Here is a 219-residue protein sequence, read N- to C-terminus: Ras-related protein RABA5d (219 aa).

N-acetylserine is present on S2. 19 to 26 (GDSAVGKS) is a binding site for GTP. The Effector region signature appears at 41 to 49 (SKATIGVEF). Residues 67 to 71 (DTAGQ), 125 to 128 (NKCD), and 155 to 156 (SA) each bind GTP. 2 S-geranylgeranyl cysteine lipidation sites follow: C215 and C216.

This sequence belongs to the small GTPase superfamily. Rab family.

It localises to the cell membrane. In terms of biological role, intracellular vesicle trafficking and protein transport. The polypeptide is Ras-related protein RABA5d (RABA5D) (Arabidopsis thaliana (Mouse-ear cress)).